The following is a 231-amino-acid chain: 5'-methylthioadenosine/S-adenosylhomocysteine nucleosidase (231 aa).

The active-site Proton acceptor is E12. Residues G78, M153, and 174–175 (ME) contribute to the substrate site. Catalysis depends on D198, which acts as the Proton donor.

It belongs to the PNP/UDP phosphorylase family. MtnN subfamily.

The catalysed reaction is S-adenosyl-L-homocysteine + H2O = S-(5-deoxy-D-ribos-5-yl)-L-homocysteine + adenine. It carries out the reaction S-methyl-5'-thioadenosine + H2O = 5-(methylsulfanyl)-D-ribose + adenine. The enzyme catalyses 5'-deoxyadenosine + H2O = 5-deoxy-D-ribose + adenine. Its pathway is amino-acid biosynthesis; L-methionine biosynthesis via salvage pathway; S-methyl-5-thio-alpha-D-ribose 1-phosphate from S-methyl-5'-thioadenosine (hydrolase route): step 1/2. Functionally, catalyzes the irreversible cleavage of the glycosidic bond in both 5'-methylthioadenosine (MTA) and S-adenosylhomocysteine (SAH/AdoHcy) to adenine and the corresponding thioribose, 5'-methylthioribose and S-ribosylhomocysteine, respectively. Also cleaves 5'-deoxyadenosine, a toxic by-product of radical S-adenosylmethionine (SAM) enzymes, into 5-deoxyribose and adenine. This chain is 5'-methylthioadenosine/S-adenosylhomocysteine nucleosidase, found in Psychromonas ingrahamii (strain DSM 17664 / CCUG 51855 / 37).